A 281-amino-acid chain; its full sequence is Nuclear transcription factor Y subunit nfya-2 (281 aa).

Disordered stretches follow at residues 1–27 and 163–261; these read MNPRGNPSKMPTQIVLNRRPAAPARPQ and REMR…VQEE. Residues 150–173 carry the Subunit association domain (SAD) motif; sequence MVNPRQYKRIIKRREMRQKMEDSG. Basic and acidic residues predominate over residues 166–188; sequence RQKMEDSGRLPLERQKYMHESRR. A DNA-binding region (NFYA/HAP2-type) is located at residues 180–204; the sequence is QKYMHESRRQHALKRRRTGGRFDAN. A compositionally biased stretch (basic residues) spans 189-198; that stretch reads QHALKRRRTG. The segment covering 204–220 has biased composition (low complexity); that stretch reads NAEAAAASSEPSISSAA.

Belongs to the NFYA/HAP2 subunit family. Forms a heterotrimeric transcription factor complex (nfya-2-NF-Y complex) composed of nfya-2, nfyb-1 and nfyc-1. Interacts with the nfyb-1 and nfyc-1 dimer; the interaction is required for subsequent binding to the 5'-CCAAT-3' box motif in DNA. Does not interact with either nfyb-1 or nfyc-1 in their monomeric form. Highly expressed in certain parts of the gonads. Expressed in the spermatheca, intestine and in some neurons in the head. Not expressed in the intestine, the hypodermis, body wall muscle surrounding the pseudocoelomic space, secretory cells in the pharyngeal terminal bulb wall, in the small ganglia surrounding the pharynx and in the neurons running anteriorly to the sensory organs in the head.

The protein resides in the nucleus. Functionally, component of the sequence-specific heterotrimeric transcription factor (nfya-2-NF-Y) which specifically recognizes a 5'-CCAAT-3' box motif found in the promoters of its target genes to regulate their expression and control cellular identity in particular tissue types. In association with the components in the nfya-2-NF-Y complex, may repress the expression of the T-box transcription factor tbx-2 throughout larval development, which most likely restricts its expression to certain tissues. In Caenorhabditis elegans, this protein is Nuclear transcription factor Y subunit nfya-2.